The following is a 142-amino-acid chain: Large-conductance mechanosensitive channel (142 aa).

The next 3 membrane-spanning stretches (helical) occupy residues 14–34 (VMDL…VTSV), 38–58 (LVMP…NYFL), and 82–102 (GSFI…FLLV).

The protein belongs to the MscL family. Homopentamer.

The protein resides in the cell inner membrane. Functionally, channel that opens in response to stretch forces in the membrane lipid bilayer. May participate in the regulation of osmotic pressure changes within the cell. The sequence is that of Large-conductance mechanosensitive channel from Sinorhizobium fredii (strain NBRC 101917 / NGR234).